A 518-amino-acid chain; its full sequence is ATP synthase subunit alpha (518 aa).

169–176 (GDRQTGKT) provides a ligand contact to ATP.

The protein belongs to the ATPase alpha/beta chains family. In terms of assembly, F-type ATPases have 2 components, CF(1) - the catalytic core - and CF(0) - the membrane proton channel. CF(1) has five subunits: alpha(3), beta(3), gamma(1), delta(1), epsilon(1). CF(0) has three main subunits: a(1), b(2) and c(9-12). The alpha and beta chains form an alternating ring which encloses part of the gamma chain. CF(1) is attached to CF(0) by a central stalk formed by the gamma and epsilon chains, while a peripheral stalk is formed by the delta and b chains.

The protein localises to the cell membrane. The enzyme catalyses ATP + H2O + 4 H(+)(in) = ADP + phosphate + 5 H(+)(out). Functionally, produces ATP from ADP in the presence of a proton gradient across the membrane. The alpha chain is a regulatory subunit. The chain is ATP synthase subunit alpha from Mycoplasma genitalium (strain ATCC 33530 / DSM 19775 / NCTC 10195 / G37) (Mycoplasmoides genitalium).